The primary structure comprises 227 residues: Transmembrane emp24 domain-containing protein 1 (227 aa).

An N-terminal signal peptide occupies residues 1-23 (MMAAGTALGLALWLLLPPVGVGG). Over 24-194 (AGPPPIQDGE…LQEGNLERVN (171 aa)) the chain is Extracellular. A GOLD domain is found at 43–125 (KQCFYQSAPA…EKLVFFELIF (83 aa)). Residues 145–170 (EILEVKMEDIKESIETMRIRLERSIQ) adopt a coiled-coil conformation. The helical transmembrane segment at 195-215 (FWSAVNVAVLLLVAVLQVCTL) threads the bilayer. Residues 216-227 (KRFFQDKRPVPM) lie on the Cytoplasmic side of the membrane. Residues 218–219 (FF) carry the COPII vesicle coat-binding motif. A COPI vesicle coat-binding motif is present at residues 218-227 (FFQDKRPVPM).

Belongs to the EMP24/GP25L family. Homodimer in endoplasmic reticulum, endoplasmic reticulum-Golgi intermediate compartment and cis-Golgi network. Interacts with IL1RL1. Interacts with RNF26; this interaction is important to modulate innate immune signaling through the cGAS-STING pathway.

It localises to the cell membrane. The protein localises to the endoplasmic reticulum membrane. Its subcellular location is the golgi apparatus. It is found in the cis-Golgi network membrane. The protein resides in the endoplasmic reticulum-Golgi intermediate compartment membrane. Potential role in vesicular protein trafficking, mainly in the early secretory pathway. May act as a cargo receptor at the lumenal side for incorporation of secretory cargo molecules into transport vesicles and may be involved in vesicle coat formation at the cytoplasmic side. Plays a positive role in IL-33-mediated IL-8 and IL-6 production by interacting with interleukin-33 receptor IL1RL1. Plays also a role in the modulation of innate immune signaling through the cGAS-STING pathway by interacting with RNF26. The chain is Transmembrane emp24 domain-containing protein 1 (TMED1) from Bos taurus (Bovine).